Consider the following 391-residue polypeptide: Coiled-coil domain-containing protein 85C (391 aa).

2 coiled-coil regions span residues 19–86 and 116–146; these read EELL…RELC and KEVG…KEII. 2 disordered regions span residues 155 to 238 and 278 to 303; these read GAGS…LNDS and PYHS…TRVT. Polar residues predominate over residues 157 to 175; sequence GSRSSIDSQNSLTNLNGSS. The span at 182–194 shows a compositional bias: low complexity; that stretch reads DGSSTSSTGSAGS. Residues 280 to 303 are compositionally biased toward polar residues; that stretch reads HSESQLSPLPQYQEPLQNGSTRVT.

It belongs to the CCDC85 family.

The protein resides in the cell junction. It is found in the tight junction. Its subcellular location is the adherens junction. Functionally, may play a role in cell-cell adhesion and epithelium development through its interaction with proteins of the beta-catenin family. May play an important role in cortical development, especially in the maintenance of radial glia. In Xenopus tropicalis (Western clawed frog), this protein is Coiled-coil domain-containing protein 85C (ccdc85c).